Reading from the N-terminus, the 125-residue chain is MSGRGKGGKVKGKSKTRSSRAGLQFPVGRIHRLLRKGNYAQRVGAGAPVYLAAVMEYLAAEVLELAGNAARDNKKSRIIPRHLQLAIRNDEELNKLLSGVTIAQGGVLPNIQAVLLPKKTQKAAK.

Residues 1–18 (MSGRGKGGKVKGKSKTRS) are compositionally biased toward basic residues. The interval 1–23 (MSGRGKGGKVKGKSKTRSSRAGL) is disordered. An N-acetylserine modification is found at Ser-2. At Gln-104 the chain carries N5-methylglutamine.

It belongs to the histone H2A family. In terms of assembly, the nucleosome is a histone octamer containing two molecules each of H2A, H2B, H3 and H4 assembled in one H3-H4 heterotetramer and two H2A-H2B heterodimers. The octamer wraps approximately 147 bp of DNA.

It localises to the nucleus. Its subcellular location is the chromosome. Functionally, core component of nucleosome. Nucleosomes wrap and compact DNA into chromatin, limiting DNA accessibility to the cellular machineries which require DNA as a template. Histones thereby play a central role in transcription regulation, DNA repair, DNA replication and chromosomal stability. DNA accessibility is regulated via a complex set of post-translational modifications of histones, also called histone code, and nucleosome remodeling. The protein is Histone H2A of Sepia officinalis (Common cuttlefish).